The following is a 217-amino-acid chain: uncharacterized protein (217 aa).

A PilZ domain is found at 98–203 (QRRQYVRTDA…GDQQALLQYC (106 aa)).

This is an uncharacterized protein from Bacillus subtilis (strain 168).